The following is an 84-amino-acid chain: Mitochondrial import inner membrane translocase subunit tim9 (84 aa).

The Twin CX3C motif signature appears at 35–59 (CFSDCVQDFTSSKLSNKESECIAKC). Disulfide bonds link cysteine 35–cysteine 59 and cysteine 39–cysteine 55.

It belongs to the small Tim family. As to quaternary structure, heterohexamer; composed of 3 copies of TIM9 and 3 copies of TIM10, named soluble 70 kDa complex. Associates with the TIM22 complex, whose core is composed of TIM22 and TIM54. Interacts with the transmembrane regions of multi-pass transmembrane proteins in transit.

The protein resides in the mitochondrion inner membrane. In terms of biological role, mitochondrial intermembrane chaperone that participates in the import and insertion of multi-pass transmembrane proteins into the mitochondrial inner membrane. Also required for the transfer of beta-barrel precursors from the TOM complex to the sorting and assembly machinery (SAM complex) of the outer membrane. Acts as a chaperone-like protein that protects the hydrophobic precursors from aggregation and guide them through the mitochondrial intermembrane space. This Schizosaccharomyces pombe (strain 972 / ATCC 24843) (Fission yeast) protein is Mitochondrial import inner membrane translocase subunit tim9 (tim9).